The chain runs to 105 residues: Met repressor (105 aa).

This sequence belongs to the MetJ family. In terms of assembly, homodimer.

Its subcellular location is the cytoplasm. This regulatory protein, when combined with SAM (S-adenosylmethionine) represses the expression of the methionine regulon and of enzymes involved in SAM synthesis. This is Met repressor from Hamiltonella defensa subsp. Acyrthosiphon pisum (strain 5AT).